We begin with the raw amino-acid sequence, 126 residues long: Fluoride-specific ion channel FluC (126 aa).

4 helical membrane passes run 5-25 (FILA…LVGI), 39-59 (TLFI…LFAV), 69-89 (IFLV…SLDT), and 103-123 (AYMI…IQIV). Gly77 and Thr80 together coordinate Na(+).

The protein belongs to the fluoride channel Fluc/FEX (TC 1.A.43) family.

Its subcellular location is the cell inner membrane. It carries out the reaction fluoride(in) = fluoride(out). Na(+) is not transported, but it plays an essential structural role and its presence is essential for fluoride channel function. Fluoride-specific ion channel. Important for reducing fluoride concentration in the cell, thus reducing its toxicity. This chain is Fluoride-specific ion channel FluC, found in Nitrobacter winogradskyi (strain ATCC 25391 / DSM 10237 / CIP 104748 / NCIMB 11846 / Nb-255).